We begin with the raw amino-acid sequence, 529 residues long: Bifunctional purine biosynthesis protein PurH (529 aa).

The MGS-like domain maps to Met1–Val148. An N6-acetyllysine modification is found at Lys287.

Belongs to the PurH family.

The enzyme catalyses (6R)-10-formyltetrahydrofolate + 5-amino-1-(5-phospho-beta-D-ribosyl)imidazole-4-carboxamide = 5-formamido-1-(5-phospho-D-ribosyl)imidazole-4-carboxamide + (6S)-5,6,7,8-tetrahydrofolate. It carries out the reaction IMP + H2O = 5-formamido-1-(5-phospho-D-ribosyl)imidazole-4-carboxamide. Its pathway is purine metabolism; IMP biosynthesis via de novo pathway; 5-formamido-1-(5-phospho-D-ribosyl)imidazole-4-carboxamide from 5-amino-1-(5-phospho-D-ribosyl)imidazole-4-carboxamide (10-formyl THF route): step 1/1. It functions in the pathway purine metabolism; IMP biosynthesis via de novo pathway; IMP from 5-formamido-1-(5-phospho-D-ribosyl)imidazole-4-carboxamide: step 1/1. This Escherichia coli O45:K1 (strain S88 / ExPEC) protein is Bifunctional purine biosynthesis protein PurH.